A 549-amino-acid polypeptide reads, in one-letter code: Glucose-6-phosphate isomerase (549 aa).

Glu353 (proton donor) is an active-site residue. Catalysis depends on residues His384 and Lys513.

The protein belongs to the GPI family.

The protein resides in the cytoplasm. It carries out the reaction alpha-D-glucose 6-phosphate = beta-D-fructose 6-phosphate. Its pathway is carbohydrate biosynthesis; gluconeogenesis. It functions in the pathway carbohydrate degradation; glycolysis; D-glyceraldehyde 3-phosphate and glycerone phosphate from D-glucose: step 2/4. Its function is as follows. Catalyzes the reversible isomerization of glucose-6-phosphate to fructose-6-phosphate. In Brucella suis (strain ATCC 23445 / NCTC 10510), this protein is Glucose-6-phosphate isomerase.